A 119-amino-acid polypeptide reads, in one-letter code: Immunoglobulin heavy variable 2-70 (119 aa).

Positions 1-19 (MDILCSTLLLLTVPSWVLS) are cleaved as a signal peptide. Position 20 is a pyrrolidone carboxylic acid (glutamine 20). Positions 20 to 44 (QVTLRESGPALVKPTQTLTLTCTFS) are framework-1. Residues 20–119 (QVTLRESGPA…DTATYYCARI (100 aa)) enclose the Ig-like domain. A disulfide bond links cysteine 41 and cysteine 116. The interval 45 to 54 (GFSLSTSGMC) is complementarity-determining-1. The framework-2 stretch occupies residues 55–71 (VSWIRQPPGKALEWLAL). The tract at residues 72–78 (IDWDDDK) is complementarity-determining-2. The segment at 79 to 116 (YYSTSLKTRLTISKDTSKNQVVLTMTNMDPVDTATYYC) is framework-3. Residues 117–119 (ARI) are complementarity-determining-3.

In terms of assembly, immunoglobulins are composed of two identical heavy chains and two identical light chains; disulfide-linked.

It localises to the secreted. The protein resides in the cell membrane. Its function is as follows. V region of the variable domain of immunoglobulin heavy chains that participates in the antigen recognition. Immunoglobulins, also known as antibodies, are membrane-bound or secreted glycoproteins produced by B lymphocytes. In the recognition phase of humoral immunity, the membrane-bound immunoglobulins serve as receptors which, upon binding of a specific antigen, trigger the clonal expansion and differentiation of B lymphocytes into immunoglobulins-secreting plasma cells. Secreted immunoglobulins mediate the effector phase of humoral immunity, which results in the elimination of bound antigens. The antigen binding site is formed by the variable domain of one heavy chain, together with that of its associated light chain. Thus, each immunoglobulin has two antigen binding sites with remarkable affinity for a particular antigen. The variable domains are assembled by a process called V-(D)-J rearrangement and can then be subjected to somatic hypermutations which, after exposure to antigen and selection, allow affinity maturation for a particular antigen. The chain is Immunoglobulin heavy variable 2-70 from Homo sapiens (Human).